A 449-amino-acid chain; its full sequence is MIQIKLHNTKTRRREPFAPADPAHVKLYVCGPTVYDRAHLGNARTVVVFDTLVRLLRHLFPRVTYVRNITDIDDKINARAAETGETIGEITARTTSWFHEDMAALYCAPPDIEPRATGHIGDIIALIERLIARGHAYAAEGHVLFAVATDAEYGKFSGRSPEELLAGARVDVATYKRDPGDFVLWKPSPPDLPGWDSPWGRGRPGWHIECSAMIHATLGETIDIHGGGADLIFPHHENEIAQSCCAFPGSEFARVWVHAGMLQVDGQKMSKSLGNFRTVQDVLGEAPGEAVRFLLLKTHYRGVLDFSTAALAEAKRELDRFYRALEKHADPAPAATPPAAFIEALADDLNTPGAIAELHALADAAMQGDAASAAGLRAAGMLIGIFNHTADQWFRGEATDDARIDALIAERLAARRNKDFARADAIRAELAAAGILLEDGPGGTTWRRA.

C30 contributes to the Zn(2+) binding site. Residues P32–N42 carry the 'HIGH' region motif. Positions 210, 235, and 239 each coordinate Zn(2+). A 'KMSKS' region motif is present at residues K268–S272. Position 271 (K271) interacts with ATP.

This sequence belongs to the class-I aminoacyl-tRNA synthetase family. As to quaternary structure, monomer. It depends on Zn(2+) as a cofactor.

The protein resides in the cytoplasm. The catalysed reaction is tRNA(Cys) + L-cysteine + ATP = L-cysteinyl-tRNA(Cys) + AMP + diphosphate. The sequence is that of Cysteine--tRNA ligase from Acidiphilium cryptum (strain JF-5).